The sequence spans 169 residues: Shikimate kinase (169 aa).

12-17 (AVGKTT) provides a ligand contact to ATP. Residue T16 coordinates Mg(2+). The substrate site is built by D34, R58, and G80. Residue R119 participates in ATP binding. R139 contacts substrate. ATP is bound at residue R156.

This sequence belongs to the shikimate kinase family. As to quaternary structure, monomer. Requires Mg(2+) as cofactor.

It localises to the cytoplasm. It carries out the reaction shikimate + ATP = 3-phosphoshikimate + ADP + H(+). It functions in the pathway metabolic intermediate biosynthesis; chorismate biosynthesis; chorismate from D-erythrose 4-phosphate and phosphoenolpyruvate: step 5/7. Its function is as follows. Catalyzes the specific phosphorylation of the 3-hydroxyl group of shikimic acid using ATP as a cosubstrate. The sequence is that of Shikimate kinase from Alkaliphilus oremlandii (strain OhILAs) (Clostridium oremlandii (strain OhILAs)).